We begin with the raw amino-acid sequence, 258 residues long: Mitochondrial distribution and morphology protein 12 (258 aa).

Residues 1-233 enclose the SMP-LTD domain; it reads MSFDIHWSNL…WPSWIELDFN (233 aa). The interval 238-258 is disordered; it reads EDLQQSKDTPTTANTGTTTTN. A compositionally biased stretch (low complexity) spans 246 to 258; that stretch reads TPTTANTGTTTTN.

This sequence belongs to the MDM12 family. In terms of assembly, component of the ER-mitochondria encounter structure (ERMES) or MDM complex, composed of MMM1, MDM10, MDM12 and MDM34. An MMM1 homodimer associates with one molecule of MDM12 on each side in a pairwise head-to-tail manner, and the SMP-LTD domains of MMM1 and MDM12 generate a continuous hydrophobic tunnel for phospholipid trafficking.

The protein resides in the mitochondrion outer membrane. Its subcellular location is the endoplasmic reticulum membrane. In terms of biological role, component of the ERMES/MDM complex, which serves as a molecular tether to connect the endoplasmic reticulum (ER) and mitochondria. Components of this complex are involved in the control of mitochondrial shape and protein biogenesis, and function in nonvesicular lipid trafficking between the ER and mitochondria. MDM12 is required for the interaction of the ER-resident membrane protein MMM1 and the outer mitochondrial membrane-resident beta-barrel protein MDM10. The MDM12-MMM1 subcomplex functions in the major beta-barrel assembly pathway that is responsible for biogenesis of all mitochondrial outer membrane beta-barrel proteins, and acts in a late step after the SAM complex. The MDM10-MDM12-MMM1 subcomplex further acts in the TOM40-specific pathway after the action of the MDM12-MMM1 complex. Essential for establishing and maintaining the structure of mitochondria and maintenance of mtDNA nucleoids. In Zygosaccharomyces rouxii (strain ATCC 2623 / CBS 732 / NBRC 1130 / NCYC 568 / NRRL Y-229), this protein is Mitochondrial distribution and morphology protein 12.